Here is a 368-residue protein sequence, read N- to C-terminus: 3-dehydroquinate synthase (368 aa).

NAD(+) contacts are provided by residues 110–114 (GVIGD), 134–135 (TS), Lys147, and Lys156. The Zn(2+) site is built by Glu189, His254, and His271.

The protein belongs to the sugar phosphate cyclases superfamily. Dehydroquinate synthase family. NAD(+) serves as cofactor. The cofactor is Co(2+). Zn(2+) is required as a cofactor.

Its subcellular location is the cytoplasm. The enzyme catalyses 7-phospho-2-dehydro-3-deoxy-D-arabino-heptonate = 3-dehydroquinate + phosphate. Its pathway is metabolic intermediate biosynthesis; chorismate biosynthesis; chorismate from D-erythrose 4-phosphate and phosphoenolpyruvate: step 2/7. Its function is as follows. Catalyzes the conversion of 3-deoxy-D-arabino-heptulosonate 7-phosphate (DAHP) to dehydroquinate (DHQ). This chain is 3-dehydroquinate synthase, found in Thermosynechococcus vestitus (strain NIES-2133 / IAM M-273 / BP-1).